Reading from the N-terminus, the 83-residue chain is Large ribosomal subunit protein uL23 (83 aa).

The protein belongs to the universal ribosomal protein uL23 family. As to quaternary structure, part of the 50S ribosomal subunit. Contacts protein L29.

Functionally, binds to 23S rRNA. One of the proteins that surrounds the polypeptide exit tunnel on the outside of the ribosome. The protein is Large ribosomal subunit protein uL23 of Archaeoglobus fulgidus (strain ATCC 49558 / DSM 4304 / JCM 9628 / NBRC 100126 / VC-16).